A 345-amino-acid chain; its full sequence is PI-PLC X domain-containing protein 1 (345 aa).

The PI-PLC X-box domain maps to 52-228 (QLWDVPLHHL…QVIVSYEDEA (177 aa)).

In terms of tissue distribution, expressed at highest levels in brain and kidney. Also detected in stomach, thymus and skeletal muscle.

The protein resides in the cytoplasm. The sequence is that of PI-PLC X domain-containing protein 1 (Plcxd1) from Mus musculus (Mouse).